Reading from the N-terminus, the 314-residue chain is NF-kappa-B inhibitor alpha (314 aa).

The segment at 1–41 (MFQPAEPGQEWAMEGPRDALKKERLLDDRHDSGLDSMKDEE) is disordered. A compositionally biased stretch (basic and acidic residues) spans 15 to 41 (GPRDALKKERLLDDRHDSGLDSMKDEE). Lysine 21 participates in a covalent cross-link: Glycyl lysine isopeptide (Lys-Gly) (interchain with G-Cter in SUMO); alternate. Lysine 21 is covalently cross-linked (Glycyl lysine isopeptide (Lys-Gly) (interchain with G-Cter in ubiquitin); alternate). A Glycyl lysine isopeptide (Lys-Gly) (interchain with G-Cter in ubiquitin) cross-link involves residue lysine 22. Residues 30-36 (HDSGLDS) carry the Destruction motif motif. Position 32 is a phosphoserine; by IKKA and IKKB (serine 32). The residue at position 36 (serine 36) is a Phosphoserine; by IKKA, IKKB, IKKE and TBK1. Tyrosine 42 bears the Phosphotyrosine; by Tyr-kinases mark. The Nuclear export signal signature appears at 45–54 (MVKELREIRL). Positions 110–120 (LQQTPLHLAVI) match the Nuclear import signal motif. ANK repeat units follow at residues 110 to 139 (LQQT…DPEL), 143 to 172 (RGNT…TQHL), 182 to 211 (NGHT…DVNA), and 216 to 245 (NGRT…DVNR). Residues asparagine 210 and asparagine 244 each carry the (3S)-3-hydroxyasparagine; by HIF1AN modification. A phosphoserine; by CK2 mark is found at serine 283 and serine 288. At threonine 291 the chain carries Phosphothreonine; by CK2. The residue at position 293 (serine 293) is a Phosphoserine; by CK2. Threonine 296 bears the Phosphothreonine mark.

Belongs to the NF-kappa-B inhibitor family. As to quaternary structure, interacts with RELA; the interaction requires the nuclear import signal. Part of a 70-90 kDa complex at least consisting of CHUK, IKBKB, NFKBIA, RELA, ELP1 and MAP3K14. Interacts with NKIRAS1 and NKIRAS2. Interacts with RWDD3; the interaction enhances sumoylation. Interacts with PRMT2. Interacts with PRKACA in platelets; this interaction is disrupted by thrombin and collagen. Interacts with MEFV. Interacts with DDRGK1; positively regulates NFKBIA phosphorylation and degradation. Interacts with HNRNPA2B1; the interaction may be mediated by the RRM2 domain of HNRNPA2B1, and HNRNPA2B1 may interact simultaneously with FAM76B and either NFKBIA or NFKBIE to form a complex. Post-translationally, phosphorylated at Ser-32 and Ser-36 by IKKA/CHUK and IKKB/IKBKB; disables inhibition of NF-kappa-B DNA-binding activity. Phosphorylation at positions 32 and 36 is prerequisite to recognition by the SCF(FBXW11) and SCF(BTRC) complexes, leading to polyubiquitination and subsequent degradation. Polyubiquitinated at Lys-21 and/or Lys-22 following phosphorylation at Ser-32 and Ser-36. Monoubiquitinated at Lys-21 and/or Lys-22 by UBE2D3. Ubiquitin chain elongation is then performed by CDC34 in cooperation with the SCF(FBXW11) E3 ligase complex, building ubiquitin chains from the UBE2D3-primed NFKBIA-linked ubiquitin. The resulting polyubiquitination leads to protein degradation. Also ubiquitinated by the SCF(BTRC) complex following stimulus-dependent phosphorylation at Ser-32 and Ser-36. Deubiquitinated by USP38, leading to NF-kappa-B inhibition. In terms of processing, sumoylated; sumoylation requires the presence of the nuclear import signal. Sumoylation blocks ubiquitination and proteasome-mediated degradation of the protein thereby increasing the protein stability. Post-translationally, hydroxylated by HIF1AN.

It localises to the cytoplasm. The protein resides in the nucleus. In terms of biological role, inhibits the activity of dimeric NF-kappa-B/REL complexes by trapping REL (RELA/p65 and NFKB1/p50) dimers in the cytoplasm by masking their nuclear localization signals. On cellular stimulation by immune and pro-inflammatory responses, becomes phosphorylated promoting ubiquitination and degradation, enabling the dimeric RELA to translocate to the nucleus and activate transcription. The sequence is that of NF-kappa-B inhibitor alpha (NFKBIA) from Sus scrofa (Pig).